A 266-amino-acid polypeptide reads, in one-letter code: Undecaprenyl-diphosphatase (266 aa).

8 helical membrane passes run 1 to 21 (MNIFQTIVLALVQGLSEFLPI), 43 to 63 (FDVVVHMGTLSAVIFYYQAMI), 83 to 103 (SKLAWGVLLGTIPVGLVGMIF), 114 to 134 (VEIIAYATLVFGVLLGFASWF), 144 to 164 (TISWVDIGFIGMAQTLALIPG), 186 to 206 (IQFAFLLSIPVISLSLILILI), 219 to 239 (LLAMGFVVAAISAYVTIVFFI), and 245 to 265 (VGMMPFVIYRLTLGIFLFFFI).

It belongs to the UppP family.

The protein resides in the cell inner membrane. The enzyme catalyses di-trans,octa-cis-undecaprenyl diphosphate + H2O = di-trans,octa-cis-undecaprenyl phosphate + phosphate + H(+). Functionally, catalyzes the dephosphorylation of undecaprenyl diphosphate (UPP). Confers resistance to bacitracin. The protein is Undecaprenyl-diphosphatase of Ruthia magnifica subsp. Calyptogena magnifica.